The following is a 92-amino-acid chain: Ferredoxin-like protein in nif region (92 aa).

4Fe-4S ferredoxin-type domains are found at residues 2 to 28 (ALKI…SLAG) and 29 to 65 (PHFE…LADG). Residues Cys9, Cys12, Cys15, Cys19, Cys38, Cys41, Cys50, and Cys54 each contribute to the [4Fe-4S] cluster site.

It depends on [4Fe-4S] cluster as a cofactor.

In terms of biological role, ferredoxins are iron-sulfur proteins that transfer electrons in a wide variety of metabolic reactions. The polypeptide is Ferredoxin-like protein in nif region (Azotobacter vinelandii).